The primary structure comprises 793 residues: Kinesin-like protein KIN-14C (793 aa).

Positions 1–43 (MASRNQNRPPRSPNAKKEGLGGISFDKRRKVETQGGTGRRQAF) are disordered. The globular stretch occupies residues 1–69 (MASRNQNRPP…IEECGKVDFT (69 aa)). A compositionally biased stretch (basic and acidic residues) spans 15–32 (AKKEGLGGISFDKRRKVE). A coiled-coil region spans residues 120-375 (KENLKVSLES…EQQLAIANER (256 aa)). Positions 431–772 (NIRVFCRVRP…LRFAARVNAC (342 aa)) constitute a Kinesin motor domain. 516–523 (GQTGSGKT) provides a ligand contact to ATP.

It belongs to the TRAFAC class myosin-kinesin ATPase superfamily. Kinesin family. KIN-14 subfamily.

It is found in the cytoplasm. The protein localises to the cytoskeleton. The protein resides in the spindle. It localises to the phragmoplast. Its subcellular location is the chromosome. It is found in the centromere. The protein localises to the kinetochore. Kinesin that supports microtubule movement in an ATP-dependent manner and has a minus-end directed polarity. Plays a crucial role in spindle morphogenesis in male meiosis. In mitosis, is required for normal microtubule accumulation at the spindle poles during prophase and may play a role in spindle assembly during prometaphase. The sequence is that of Kinesin-like protein KIN-14C from Arabidopsis thaliana (Mouse-ear cress).